Here is a 770-residue protein sequence, read N- to C-terminus: 1,4-alpha-glucan branching enzyme GlgB (770 aa).

The active-site Nucleophile is aspartate 437. The active-site Proton donor is the glutamate 488.

Belongs to the glycosyl hydrolase 13 family. GlgB subfamily. As to quaternary structure, monomer.

The enzyme catalyses Transfers a segment of a (1-&gt;4)-alpha-D-glucan chain to a primary hydroxy group in a similar glucan chain.. Its pathway is glycan biosynthesis; glycogen biosynthesis. In terms of biological role, catalyzes the formation of the alpha-1,6-glucosidic linkages in glycogen by scission of a 1,4-alpha-linked oligosaccharide from growing alpha-1,4-glucan chains and the subsequent attachment of the oligosaccharide to the alpha-1,6 position. This chain is 1,4-alpha-glucan branching enzyme GlgB, found in Synechococcus sp. (strain JA-3-3Ab) (Cyanobacteria bacterium Yellowstone A-Prime).